The primary structure comprises 428 residues: Putative UPF0496 protein 5 (428 aa).

Over residues 1-14 (MGNRHGIMRPRRLA) the composition is skewed to basic residues. The interval 1-40 (MGNRHGIMRPRRLASGRSAAAAEEEGEDGEGEPGSYEAAC) is disordered. Positions 22-31 (AEEEGEDGEG) are enriched in acidic residues. The next 2 membrane-spanning stretches (helical) occupy residues 229-249 (IVFL…AAIA) and 252-272 (PVAA…GKWM).

It belongs to the UPF0496 family.

It localises to the membrane. The protein is Putative UPF0496 protein 5 of Oryza sativa subsp. indica (Rice).